A 187-amino-acid polypeptide reads, in one-letter code: Troponin I, slow skeletal muscle (187 aa).

Position 2 is an N-acetylproline (proline 2). Positions 2–48 are involved in binding TNC; it reads PEVERKPKITASRKLLLKSLMLAKAKECWEQEHEEREAEKVRYLAER. The residue at position 58 (serine 58) is a Phosphoserine. The involved in binding TNC and actin stretch occupies residues 97–118; the sequence is LKLKVMDLRGKFKRPPLRRVRV.

Belongs to the troponin I family. As to quaternary structure, binds to actin and tropomyosin. As to expression, highest levels observed in human skeletal muscle (e.g. gastrocnemious muscle), differentiated cultures of primary human muscle cells and rhabdomyosarcoma cells cultured in low serum medium. Expressed in C2 muscle cell myoblasts and myotubes.

Troponin I is the inhibitory subunit of troponin, the thin filament regulatory complex which confers calcium-sensitivity to striated muscle actomyosin ATPase activity. This chain is Troponin I, slow skeletal muscle (TNNI1), found in Homo sapiens (Human).